A 46-amino-acid chain; its full sequence is Esculentin-1SEb (46 aa).

A disulfide bridge connects residues Cys40 and Cys46.

In terms of tissue distribution, expressed by the skin glands.

The protein localises to the secreted. In terms of biological role, mast cell degranulating peptide. Causes histamine release from rat peritoneal mast cells in vitro. Has antibacterial activity against the Gram-negative bacterium E.coli K12 and Gram-positive bacterium M.luteus NCT C2665. The polypeptide is Esculentin-1SEb (Lithobates sevosus (Dusky gopher frog)).